The following is a 173-amino-acid chain: Bilin biosynthesis protein PecF (173 aa).

The protein belongs to the CpcE/RpcE/PecE family.

Functionally, an enzyme involved in the biosynthesis of bilin. The chain is Bilin biosynthesis protein PecF (pecF) from Nostoc sp. (strain PCC 7120 / SAG 25.82 / UTEX 2576).